The following is a 399-amino-acid chain: Transferrin receptor subunit ESAG6 (399 aa).

A signal peptide spans M1–A17. N26 and N110 each carry an N-linked (GlcNAc...) asparagine glycan. 3 disulfides stabilise this stretch: C34–C161, C84–C312, and C144–C215. N235, N250, and N360 each carry an N-linked (GlcNAc...) asparagine glycan. Residue N376 is the site of GPI-anchor amidated asparagine attachment. The propeptide at A377–L399 is removed in mature form.

Heterodimer composed of ESAG6 and ESAG7. In terms of processing, N-glycosylated. Glycosylation is dispensable for heterodimer formation and host transferrin binding.

The protein resides in the cell membrane. It is found in the flagellar pocket. In terms of biological role, transferrin receptor subunit involved in receptor-mediated acquisition of iron from the environment by binding host TF/transferrin. This is Transferrin receptor subunit ESAG6 from Trypanosoma brucei brucei.